The chain runs to 793 residues: Protocadherin beta-7 (793 aa).

A signal peptide spans 1–26; it reads MEARVERAVQKRQVLFLCVFLGMSWA. The Extracellular segment spans residues 27–688; that stretch reads GAEPLRYFVA…DQANSLTVYL (662 aa). Cadherin domains lie at 35–133, 138–242, 247–347, 352–451, and 456–561; these read VAEE…APVF, ISLK…APDF, YKVQ…RPEL, LTSP…APAF, and YTLF…SPFV. Asn169 is a glycosylation site (N-linked (GlcNAc...) asparagine). Residues Asn418 and Asn436 are each glycosylated (N-linked (GlcNAc...) asparagine). The N-linked (GlcNAc...) asparagine glycan is linked to Asn567. One can recognise a Cadherin 6 domain in the interval 568-671; it reads SSAPCTEPLP…LVDGFSQPYL (104 aa). The chain crosses the membrane as a helical span at residues 689–709; the sequence is VVALASVSSLFLLSVLLFVAV. Over 710-793 the chain is Cytoplasmic; that stretch reads RLCRRSRAAP…NRPFQNNLGF (84 aa).

The protein localises to the cell membrane. In terms of biological role, potential calcium-dependent cell-adhesion protein. May be involved in the establishment and maintenance of specific neuronal connections in the brain. The sequence is that of Protocadherin beta-7 (PCDHB7) from Homo sapiens (Human).